Reading from the N-terminus, the 291-residue chain is MEMO1 family protein TK1477 (291 aa).

Belongs to the MEMO1 family.

In Thermococcus kodakarensis (strain ATCC BAA-918 / JCM 12380 / KOD1) (Pyrococcus kodakaraensis (strain KOD1)), this protein is MEMO1 family protein TK1477.